The following is a 248-amino-acid chain: UPF0246 protein RPR_00055 (248 aa).

Belongs to the UPF0246 family.

This Rickettsia peacockii (strain Rustic) protein is UPF0246 protein RPR_00055.